Here is a 321-residue protein sequence, read N- to C-terminus: tRNA-dihydrouridine synthase B (321 aa).

FMN-binding positions include 16–18 (PMA) and Gln70. Cys100 (proton donor) is an active-site residue. Residues Lys139, 200–202 (NGD), and 224–225 (GR) each bind FMN.

The protein belongs to the Dus family. DusB subfamily. Requires FMN as cofactor.

The catalysed reaction is a 5,6-dihydrouridine in tRNA + NAD(+) = a uridine in tRNA + NADH + H(+). The enzyme catalyses a 5,6-dihydrouridine in tRNA + NADP(+) = a uridine in tRNA + NADPH + H(+). Functionally, catalyzes the synthesis of 5,6-dihydrouridine (D), a modified base found in the D-loop of most tRNAs, via the reduction of the C5-C6 double bond in target uridines. This Pectobacterium carotovorum (Erwinia carotovora) protein is tRNA-dihydrouridine synthase B.